The primary structure comprises 137 residues: Phosphoribosyl-AMP cyclohydrolase (137 aa).

Aspartate 83 contacts Mg(2+). Zn(2+) is bound at residue cysteine 84. Aspartate 85 and aspartate 87 together coordinate Mg(2+). Cysteine 101 and cysteine 108 together coordinate Zn(2+).

The protein belongs to the PRA-CH family. Homodimer. Mg(2+) is required as a cofactor. It depends on Zn(2+) as a cofactor.

The protein localises to the cytoplasm. It catalyses the reaction 1-(5-phospho-beta-D-ribosyl)-5'-AMP + H2O = 1-(5-phospho-beta-D-ribosyl)-5-[(5-phospho-beta-D-ribosylamino)methylideneamino]imidazole-4-carboxamide. It participates in amino-acid biosynthesis; L-histidine biosynthesis; L-histidine from 5-phospho-alpha-D-ribose 1-diphosphate: step 3/9. In terms of biological role, catalyzes the hydrolysis of the adenine ring of phosphoribosyl-AMP. This chain is Phosphoribosyl-AMP cyclohydrolase, found in Burkholderia mallei (strain ATCC 23344).